The primary structure comprises 561 residues: DNA ligase B (561 aa).

The active-site N6-AMP-lysine intermediate is the Lys125.

It belongs to the NAD-dependent DNA ligase family. LigB subfamily.

The catalysed reaction is NAD(+) + (deoxyribonucleotide)n-3'-hydroxyl + 5'-phospho-(deoxyribonucleotide)m = (deoxyribonucleotide)n+m + AMP + beta-nicotinamide D-nucleotide.. In terms of biological role, catalyzes the formation of phosphodiester linkages between 5'-phosphoryl and 3'-hydroxyl groups in double-stranded DNA using NAD as a coenzyme and as the energy source for the reaction. The chain is DNA ligase B from Salmonella heidelberg (strain SL476).